Consider the following 305-residue polypeptide: UDP-3-O-acyl-N-acetylglucosamine deacetylase (305 aa).

Residues histidine 79, histidine 238, and aspartate 242 each contribute to the Zn(2+) site. The Proton donor role is filled by histidine 265.

This sequence belongs to the LpxC family. Zn(2+) is required as a cofactor.

The catalysed reaction is a UDP-3-O-[(3R)-3-hydroxyacyl]-N-acetyl-alpha-D-glucosamine + H2O = a UDP-3-O-[(3R)-3-hydroxyacyl]-alpha-D-glucosamine + acetate. It functions in the pathway glycolipid biosynthesis; lipid IV(A) biosynthesis; lipid IV(A) from (3R)-3-hydroxytetradecanoyl-[acyl-carrier-protein] and UDP-N-acetyl-alpha-D-glucosamine: step 2/6. Functionally, catalyzes the hydrolysis of UDP-3-O-myristoyl-N-acetylglucosamine to form UDP-3-O-myristoylglucosamine and acetate, the committed step in lipid A biosynthesis. The chain is UDP-3-O-acyl-N-acetylglucosamine deacetylase from Shigella boydii serotype 4 (strain Sb227).